Here is a 74-residue protein sequence, read N- to C-terminus: ATP synthase subunit 9, mitochondrial (74 aa).

Helical transmembrane passes span 8 to 28 (IGAGLATIGVSGAGVGIGLIF) and 50 to 70 (ILGFALTEATGLFCLMLAFLI).

This sequence belongs to the ATPase C chain family. F-type ATPases have 2 components, CF(1) - the catalytic core - and CF(0) - the membrane proton channel. CF(1) has five subunits: alpha(3), beta(3), gamma(1), delta(1), epsilon(1). CF(0) has three main subunits: a, b and c.

The protein localises to the mitochondrion membrane. Functionally, mitochondrial membrane ATP synthase (F(1)F(0) ATP synthase or Complex V) produces ATP from ADP in the presence of a proton gradient across the membrane which is generated by electron transport complexes of the respiratory chain. F-type ATPases consist of two structural domains, F(1) - containing the extramembraneous catalytic core and F(0) - containing the membrane proton channel, linked together by a central stalk and a peripheral stalk. During catalysis, ATP synthesis in the catalytic domain of F(1) is coupled via a rotary mechanism of the central stalk subunits to proton translocation. Part of the complex F(0) domain. A homomeric c-ring of probably 10 subunits is part of the complex rotary element. The sequence is that of ATP synthase subunit 9, mitochondrial (atp9) from Schizosaccharomyces pombe (strain 972 / ATCC 24843) (Fission yeast).